Here is a 1022-residue protein sequence, read N- to C-terminus: Polyamine-modulated factor 1-binding protein 1 (1022 aa).

Coiled-coil stretches lie at residues 89–121 (NKQYHLRQLQQLKKKLLTLQQELEFRTQELQAS), 169–281 (EKLH…ACSN), 312–377 (SEDC…LREE), 411–732 (LKKD…SAIQ), and 758–968 (QDDL…KAGN). Composition is skewed to basic and acidic residues over residues 545 to 556 (QKESSKIEEERK) and 571 to 582 (EGQRRLSNAEKE). Positions 545-582 (QKESSKIEEERKHNRQRLQELSSELSEGQRRLSNAEKE) are disordered.

As to expression, expressed in the testis.

The protein localises to the cell projection. Its subcellular location is the cilium. It is found in the flagellum. Functionally, required for normal spermatogenesis. It functions as a scaffold protein that attaches the sperm head-tail connecting piece to the nuclear envelope, thus maintaining sperm head and tail integrity. May also be involved in the general organization of cellular cytoskeleton. This is Polyamine-modulated factor 1-binding protein 1 (Pmfbp1) from Mus musculus (Mouse).